The sequence spans 429 residues: Small ribosomal subunit protein bS1 (429 aa).

S1 motif domains are found at residues 55–128, 144–211, 231–299, and 316–385; these read GDVV…LSKK, GDTV…SRKA, GEVV…LSIK, and GSVL…LSMK. Residues 382–399 are compositionally biased toward basic and acidic residues; that stretch reads LSMKALEEKPEREDRRGN. The tract at residues 382 to 412 is disordered; it reads LSMKALEEKPEREDRRGNDGSASRADIAAYK.

It belongs to the bacterial ribosomal protein bS1 family.

Binds mRNA; thus facilitating recognition of the initiation point. It is needed to translate mRNA with a short Shine-Dalgarno (SD) purine-rich sequence. This chain is Small ribosomal subunit protein bS1 (rps1), found in Leuconostoc lactis.